A 914-amino-acid polypeptide reads, in one-letter code: Sensor protein TorS (914 aa).

The Cytoplasmic segment spans residues 1–8 (MNLTLTRR). A helical membrane pass occupies residues 9–29 (LWMGFALMALLTLTSTLVGWY). Residues 30–332 (NLRFISQVEK…EKASARGQYS (303 aa)) lie on the Periplasmic side of the membrane. Residues 333–353 (LLLLGMVSLCALILILWRVVY) form a helical membrane-spanning segment. Residues 354–407 (RSVTRPLAEQTQALQRLLDGDIDSPFPETAGVRELDTIGRLMDAFRSNVHALNR) enclose the HAMP domain. Over 354–914 (RSVTRPLAEQ…WLHKKDLNAI (561 aa)) the chain is Cytoplasmic. In terms of domain architecture, Histidine kinase spans 450–664 (AMSHEIRTPL…CFCLRLPLRV (215 aa)). Position 453 is a phosphohistidine; by autocatalysis (His-453). The Response regulatory domain occupies 683–798 (RLLLIEDNPL…VLGQLLAHYL (116 aa)). 4-aspartylphosphate is present on Asp-733. An HPt domain is found at 821–914 (GTEKIHEWLV…WLHKKDLNAI (94 aa)). His-860 bears the Phosphohistidine mark.

May form homomultimers. Seems to interact with TorT and TorC apocytochrome. In terms of processing, activation requires a sequential transfer of a phosphate group from a His in the primary transmitter domain, to an Asp in the receiver domain and to a His in the secondary transmitter domain.

The protein resides in the cell inner membrane. It catalyses the reaction ATP + protein L-histidine = ADP + protein N-phospho-L-histidine.. Inhibited by TorC apocytochrome. Functionally, member of the two-component regulatory system TorS/TorR involved in the anaerobic utilization of trimethylamine-N-oxide (TMAO). Detects the presence of TMAO in the medium and, in response, activates TorR via a four-step phosphorelay. When TMAO is removed, TorS can dephosphorylate TorR, probably by a reverse phosphorelay involving His-860 and Asp-733. This Escherichia coli (strain K12) protein is Sensor protein TorS (torS).